Here is a 360-residue protein sequence, read N- to C-terminus: Peptide chain release factor 1 (360 aa).

Gln-235 carries the N5-methylglutamine modification. Residues Gln-284–Thr-293 are compositionally biased toward basic and acidic residues. The segment at Gln-284 to Asp-305 is disordered.

The protein belongs to the prokaryotic/mitochondrial release factor family. In terms of processing, methylated by PrmC. Methylation increases the termination efficiency of RF1.

It is found in the cytoplasm. Functionally, peptide chain release factor 1 directs the termination of translation in response to the peptide chain termination codons UAG and UAA. In Pectobacterium carotovorum subsp. carotovorum (strain PC1), this protein is Peptide chain release factor 1.